We begin with the raw amino-acid sequence, 223 residues long: Sugar fermentation stimulation protein homolog (223 aa).

Belongs to the SfsA family.

This is Sugar fermentation stimulation protein homolog from Thermosipho melanesiensis (strain DSM 12029 / CIP 104789 / BI429).